The chain runs to 765 residues: LPS-assembly protein LptD (765 aa).

The first 18 residues, 1-18 (MQIRYFLALSLLPQVVLA), serve as a signal peptide directing secretion.

It belongs to the LptD family. In terms of assembly, component of the lipopolysaccharide transport and assembly complex. Interacts with LptE and LptA.

Its subcellular location is the cell outer membrane. Together with LptE, is involved in the assembly of lipopolysaccharide (LPS) at the surface of the outer membrane. The protein is LPS-assembly protein LptD of Shewanella sp. (strain ANA-3).